The chain runs to 304 residues: Non-specific ribonucleoside hydrolase RihC (304 aa).

His-233 is a catalytic residue.

The protein belongs to the IUNH family. RihC subfamily.

Functionally, hydrolyzes both purine and pyrimidine ribonucleosides with a broad-substrate specificity. The polypeptide is Non-specific ribonucleoside hydrolase RihC (Escherichia coli (strain 55989 / EAEC)).